The following is a 376-amino-acid chain: Cyclin-dependent kinase 9-B (376 aa).

The 301-residue stretch at Y19–F319 folds into the Protein kinase domain. ATP contacts are provided by residues I25 to V33 and K48. The active-site Proton acceptor is the D153. The disordered stretch occupies residues P345–F376. The segment covering P354–Q369 has biased composition (low complexity).

This sequence belongs to the protein kinase superfamily. CMGC Ser/Thr protein kinase family. CDC2/CDKX subfamily. Associates with cyclin-T to form P-TEFb.

The protein localises to the nucleus. It catalyses the reaction L-seryl-[protein] + ATP = O-phospho-L-seryl-[protein] + ADP + H(+). The enzyme catalyses L-threonyl-[protein] + ATP = O-phospho-L-threonyl-[protein] + ADP + H(+). The catalysed reaction is [DNA-directed RNA polymerase] + ATP = phospho-[DNA-directed RNA polymerase] + ADP + H(+). Its function is as follows. Member of the cyclin-dependent kinase pair (CDK9/cyclin-T) complex, also called positive transcription elongation factor B (P-TEFb), which is proposed to facilitate the transition from abortive to production elongation by phosphorylating the CTD (C-terminal domain) of the large subunit of RNA polymerase II (RNAP II) and SUPT5H. The polypeptide is Cyclin-dependent kinase 9-B (cdk9-b) (Xenopus laevis (African clawed frog)).